The chain runs to 277 residues: Knob-associated histidine-rich protein (277 aa).

Disordered stretches follow at residues 95-114 (DGSH…GYGY) and 162-277 (SSVN…KKKK). 2 stretches are compositionally biased toward basic and acidic residues: residues 169–190 (KHGD…EGEK) and 211–220 (KDNEDAESVK). A compositionally biased stretch (basic residues) spans 221–237 (SKKHKSHDCEKKKSKKH). Basic and acidic residues-rich tracts occupy residues 238–259 (KDNE…GEKH) and 268–277 (KTNEEKKKKK).

It localises to the secreted. Functionally, KAHRP might mimick human histidine-rich glycoproteins to anchor host thrombospondin or a parasite analog in a binding complex with the endothelial cell receptor. The sequence is that of Knob-associated histidine-rich protein from Plasmodium falciparum (isolate CDC / Honduras).